The sequence spans 107 residues: U1-lycotoxin-Ls1b (107 aa).

An N-terminal signal peptide occupies residues 1-20; it reads MMKVLVVVALLATLISYSSS. The propeptide occupies 21 to 41; the sequence is EGIDDLEADELLSLMANEQTR. 4 cysteine pairs are disulfide-bonded: cysteine 44–cysteine 59, cysteine 51–cysteine 68, cysteine 58–cysteine 86, and cysteine 70–cysteine 84.

The protein belongs to the neurotoxin 19 (CSTX) family. 04 (U1-Lctx) subfamily. As to expression, expressed by the venom gland.

The protein localises to the secreted. This chain is U1-lycotoxin-Ls1b, found in Lycosa singoriensis (Wolf spider).